The primary structure comprises 150 residues: MTKRFQHSRRDLRERAFQALFTMEMGGDFLLASQFAYDYDKEVADDKQPSELPVFLLNLVNGVMDHKAELDEVIKKNLKAGWSIERLTVVDKTMLRLGLFEMTLFEETPDRVALNEIIEIAKKYSDDTSAKFINGLLSQFVSDESAAVTD.

The protein belongs to the NusB family.

Its function is as follows. Involved in transcription antitermination. Required for transcription of ribosomal RNA (rRNA) genes. Binds specifically to the boxA antiterminator sequence of the ribosomal RNA (rrn) operons. This is Transcription antitermination protein NusB from Streptococcus equi subsp. zooepidemicus (strain H70).